Here is a 169-residue protein sequence, read N- to C-terminus: Allophycocyanin subunit beta-18 (169 aa).

At Asn72 the chain carries N4-methylasparagine. Cys82 contacts (2R,3E)-phycocyanobilin.

The protein belongs to the phycobiliprotein family. Heterodimer of an alpha and a beta chain. Contains one covalently linked bilin chromophore.

Its subcellular location is the plastid. It localises to the chloroplast thylakoid membrane. Its function is as follows. Light-harvesting photosynthetic bile pigment-protein from the phycobiliprotein complex. Allophycocyanin has a maximum absorption at approximately 650 nanometers. The protein is Allophycocyanin subunit beta-18 (apcF) of Pyropia yezoensis (Susabi-nori).